The sequence spans 60 residues: Ribosome biogenesis protein Nop10 (60 aa).

Positions 29 to 60 (CDGPTENSAPAPFSPEDPYGEYRRRVRRRASE) are disordered.

It belongs to the NOP10 family.

Functionally, involved in ribosome biogenesis; more specifically in 18S rRNA pseudouridylation and in cleavage of pre-rRNA. This chain is Ribosome biogenesis protein Nop10, found in Halorubrum lacusprofundi (strain ATCC 49239 / DSM 5036 / JCM 8891 / ACAM 34).